Reading from the N-terminus, the 448-residue chain is Exodeoxyribonuclease 7 large subunit (448 aa).

The protein belongs to the XseA family. Heterooligomer composed of large and small subunits.

The protein resides in the cytoplasm. The enzyme catalyses Exonucleolytic cleavage in either 5'- to 3'- or 3'- to 5'-direction to yield nucleoside 5'-phosphates.. In terms of biological role, bidirectionally degrades single-stranded DNA into large acid-insoluble oligonucleotides, which are then degraded further into small acid-soluble oligonucleotides. The chain is Exodeoxyribonuclease 7 large subunit from Nitrosomonas europaea (strain ATCC 19718 / CIP 103999 / KCTC 2705 / NBRC 14298).